The sequence spans 334 residues: Protein-methionine-sulfoxide reductase catalytic subunit MsrP (334 aa).

Residues 1–44 (MKKNQFLKESDVTAESVFFMKRRQVLKALGISAAALSLPHAAHA) constitute a signal peptide (tat-type signal). Mo-molybdopterin contacts are provided by residues asparagine 88, 91–92 (YE), cysteine 146, threonine 181, asparagine 233, arginine 238, and 249–251 (GIK).

Belongs to the MsrP family. As to quaternary structure, heterodimer of a catalytic subunit (MsrP) and a heme-binding subunit (MsrQ). Requires Mo-molybdopterin as cofactor. Predicted to be exported by the Tat system. The position of the signal peptide cleavage has not been experimentally proven.

Its subcellular location is the periplasm. The catalysed reaction is L-methionyl-[protein] + a quinone + H2O = L-methionyl-(S)-S-oxide-[protein] + a quinol. The enzyme catalyses L-methionyl-[protein] + a quinone + H2O = L-methionyl-(R)-S-oxide-[protein] + a quinol. Functionally, part of the MsrPQ system that repairs oxidized periplasmic proteins containing methionine sulfoxide residues (Met-O), using respiratory chain electrons. Thus protects these proteins from oxidative-stress damage caused by reactive species of oxygen and chlorine generated by the host defense mechanisms. MsrPQ is essential for the maintenance of envelope integrity under bleach stress, rescuing a wide series of structurally unrelated periplasmic proteins from methionine oxidation, including the primary periplasmic chaperone SurA and the lipoprotein Pal. The catalytic subunit MsrP is non-stereospecific, being able to reduce both (R-) and (S-) diastereoisomers of methionine sulfoxide. This chain is Protein-methionine-sulfoxide reductase catalytic subunit MsrP, found in Escherichia coli O157:H7.